We begin with the raw amino-acid sequence, 197 residues long: MALPGTLRFGVLMALPGALASGADPEDGVGSSVVTIVLLLLLLLLLVTALALAWRRLSHASGGYYHPARLGAALWGHTCRLLWASPAGRWLRARTELESPEESGPPEDEEDAEDFVIDGGPEEAAAKEEEQRCQAEQTRDPRDTDSDGGLGLSSQGPVGSGSSAEALLSDLHAFSGSAAWDDSAGGAGGQGLRVTAL.

A helical membrane pass occupies residues valine 33–alanine 53. Phosphoserine occurs at positions 99 and 103. 2 disordered regions span residues glycine 120–alanine 164 and serine 177–leucine 197. Residues alanine 124–aspartate 145 show a composition bias toward basic and acidic residues.

As to quaternary structure, interacts with CD45/PTPRC. In terms of processing, phosphorylated on tyrosine residues. In terms of tissue distribution, leukocyte-specific. Expressed in B- and T-cell lines, in spleen, thymus, and bone marrow of adult mice, and in embryos.

The protein localises to the membrane. This Mus musculus (Mouse) protein is Protein tyrosine phosphatase receptor type C-associated protein (Ptprcap).